A 60-amino-acid chain; its full sequence is Large ribosomal subunit protein bL32 (60 aa).

The interval 1-28 (MAVQQNKKSRSARDMRRSHDALEASTLS) is disordered. Positions 11–22 (SARDMRRSHDAL) are enriched in basic and acidic residues.

This sequence belongs to the bacterial ribosomal protein bL32 family.

The sequence is that of Large ribosomal subunit protein bL32 from Pseudomonas savastanoi pv. phaseolicola (strain 1448A / Race 6) (Pseudomonas syringae pv. phaseolicola (strain 1448A / Race 6)).